The following is a 331-amino-acid chain: DNA-directed RNA polymerase subunit alpha (331 aa).

The segment at 1-226 (MLIAQRPTLT…ELFGLARELN (226 aa)) is alpha N-terminal domain (alpha-NTD). Positions 243–331 (LSSELSMPIE…SYDEDETTTN (89 aa)) are alpha C-terminal domain (alpha-CTD).

It belongs to the RNA polymerase alpha chain family. In terms of assembly, homodimer. The RNAP catalytic core consists of 2 alpha, 1 beta, 1 beta' and 1 omega subunit. When a sigma factor is associated with the core the holoenzyme is formed, which can initiate transcription.

The catalysed reaction is RNA(n) + a ribonucleoside 5'-triphosphate = RNA(n+1) + diphosphate. DNA-dependent RNA polymerase catalyzes the transcription of DNA into RNA using the four ribonucleoside triphosphates as substrates. This Clavibacter michiganensis subsp. michiganensis (strain NCPPB 382) protein is DNA-directed RNA polymerase subunit alpha.